We begin with the raw amino-acid sequence, 200 residues long: Ras-related protein RABF2a (200 aa).

A GTP-binding site is contributed by 17-25 (GDVGAGKSS). Positions 39 to 47 (QESTIGAAF) match the Effector region motif. Residues 65–69 (DTAGQ), 123–126 (NKAD), and 153–154 (SA) each bind GTP. 2 S-geranylgeranyl cysteine lipidation sites follow: C198 and C199.

Belongs to the small GTPase superfamily. Rab family. Interacts with VPS9A. Interacts with EREX (via PX domain). Binds to VPS3. As to expression, high in stem, root, and inflorescence.

The protein localises to the endosome membrane. The protein resides in the prevacuolar compartment membrane. Functionally, involved in the trafficking of soluble cargo proteins from the prevacuolar compartment to the central vacuole. Involved in vacuolar transport of storage proteins with EREX as effector. Regulates membrane trafficking to protein storage vacuoles (PSVs). The protein is Ras-related protein RABF2a (RABF2A) of Arabidopsis thaliana (Mouse-ear cress).